Here is a 352-residue protein sequence, read N- to C-terminus: Ribosomal RNA large subunit methyltransferase M (352 aa).

Residues Ser-184, 217-220, Asp-236, Asp-256, and Asp-272 each bind S-adenosyl-L-methionine; that span reads APGG. Lys-301 acts as the Proton acceptor in catalysis.

It belongs to the class I-like SAM-binding methyltransferase superfamily. RNA methyltransferase RlmE family. RlmM subfamily. In terms of assembly, monomer.

It localises to the cytoplasm. It carries out the reaction cytidine(2498) in 23S rRNA + S-adenosyl-L-methionine = 2'-O-methylcytidine(2498) in 23S rRNA + S-adenosyl-L-homocysteine + H(+). In terms of biological role, catalyzes the 2'-O-methylation at nucleotide C2498 in 23S rRNA. In Pseudomonas paraeruginosa (strain DSM 24068 / PA7) (Pseudomonas aeruginosa (strain PA7)), this protein is Ribosomal RNA large subunit methyltransferase M.